Here is an 897-residue protein sequence, read N- to C-terminus: Alanine--tRNA ligase (897 aa).

Residues His581, His585, Cys684, and His688 each coordinate Zn(2+).

This sequence belongs to the class-II aminoacyl-tRNA synthetase family. It depends on Zn(2+) as a cofactor.

Its subcellular location is the cytoplasm. It carries out the reaction tRNA(Ala) + L-alanine + ATP = L-alanyl-tRNA(Ala) + AMP + diphosphate. Functionally, catalyzes the attachment of alanine to tRNA(Ala) in a two-step reaction: alanine is first activated by ATP to form Ala-AMP and then transferred to the acceptor end of tRNA(Ala). Also edits incorrectly charged Ser-tRNA(Ala) and Gly-tRNA(Ala) via its editing domain. This Mycobacterium sp. (strain JLS) protein is Alanine--tRNA ligase.